Here is a 798-residue protein sequence, read N- to C-terminus: Penicillin-binding protein 1A (798 aa).

Residues 1 to 9 (MIKKIMTTC) are Cytoplasmic-facing. Residues 10–30 (FGLVFGLCVFAVGLLAIAILA) traverse the membrane as a helical; Signal-anchor for type II membrane protein segment. The Periplasmic portion of the chain corresponds to 31 to 798 (TYPKLPSLDS…SKRQQLDSLF (768 aa)). Positions 50-218 (LTVYSADGKI…SAYNPIVNPE (169 aa)) are transglycosylase. Catalysis depends on Glu88, which acts as the Proton donor; for transglycosylase activity. The segment at 378–700 (RRALGFAARA…GTIAVPVWVD (323 aa)) is transpeptidase. The Acyl-ester intermediate; for transpeptidase activity role is filled by Ser461. A disordered region spans residues 739–798 (LMLDNGGAAPQPSRRVKEDDGGAAEGGRQEADDESRQDMQETPVLPSNTDSKRQQLDSLF). Composition is skewed to basic and acidic residues over residues 765-777 (GRQE…RQDM) and 788-798 (DSKRQQLDSLF).

In the N-terminal section; belongs to the glycosyltransferase 51 family. The protein in the C-terminal section; belongs to the transpeptidase family.

Its subcellular location is the cell inner membrane. The enzyme catalyses [GlcNAc-(1-&gt;4)-Mur2Ac(oyl-L-Ala-gamma-D-Glu-L-Lys-D-Ala-D-Ala)](n)-di-trans,octa-cis-undecaprenyl diphosphate + beta-D-GlcNAc-(1-&gt;4)-Mur2Ac(oyl-L-Ala-gamma-D-Glu-L-Lys-D-Ala-D-Ala)-di-trans,octa-cis-undecaprenyl diphosphate = [GlcNAc-(1-&gt;4)-Mur2Ac(oyl-L-Ala-gamma-D-Glu-L-Lys-D-Ala-D-Ala)](n+1)-di-trans,octa-cis-undecaprenyl diphosphate + di-trans,octa-cis-undecaprenyl diphosphate + H(+). It carries out the reaction Preferential cleavage: (Ac)2-L-Lys-D-Ala-|-D-Ala. Also transpeptidation of peptidyl-alanyl moieties that are N-acyl substituents of D-alanine.. The protein operates within cell wall biogenesis; peptidoglycan biosynthesis. Functionally, cell wall formation. Synthesis of cross-linked peptidoglycan from the lipid intermediates. The enzyme has a penicillin-insensitive transglycosylase N-terminal domain (formation of linear glycan strands) and a penicillin-sensitive transpeptidase C-terminal domain (cross-linking of the peptide subunits). This is Penicillin-binding protein 1A (mrcA) from Neisseria lactamica.